The sequence spans 217 residues: MNLVLMGLPGAGKGTQAERIVEDFGIPHISTGDMFRAAMKEETDLGLEAKSYIDKGELVPDEVTIGIVRERLGKNDCDGGFLLDGFPRTVAQAEALEEILKGLGKSIDHVINIQVDKDALMERLTGRRICKNCGATYHLVFNPPAKENVCDKCGGELYQREDDNEATVSTRLEVNMKQTQPLLDFYEDKGYLVNIDGQKHINEVYADIKELLGGRDK.

10-15 (GAGKGT) lines the ATP pocket. Residues 30-59 (STGDMFRAAMKEETDLGLEAKSYIDKGELV) are NMP. AMP-binding positions include T31, R36, 57–59 (ELV), 85–88 (GFPR), and Q92. The LID stretch occupies residues 126-163 (GRRICKNCGATYHLVFNPPAKENVCDKCGGELYQREDD). Position 127 (R127) interacts with ATP. Zn(2+) contacts are provided by C130 and C133. Residue 136 to 137 (TY) coordinates ATP. C150 and C153 together coordinate Zn(2+). AMP is bound by residues R160 and R171. K199 contacts ATP.

Belongs to the adenylate kinase family. In terms of assembly, monomer.

The protein localises to the cytoplasm. The enzyme catalyses AMP + ATP = 2 ADP. It participates in purine metabolism; AMP biosynthesis via salvage pathway; AMP from ADP: step 1/1. Catalyzes the reversible transfer of the terminal phosphate group between ATP and AMP. Plays an important role in cellular energy homeostasis and in adenine nucleotide metabolism. The polypeptide is Adenylate kinase (Bacillus licheniformis (strain ATCC 14580 / DSM 13 / JCM 2505 / CCUG 7422 / NBRC 12200 / NCIMB 9375 / NCTC 10341 / NRRL NRS-1264 / Gibson 46)).